Reading from the N-terminus, the 1083-residue chain is Solute carrier family 12 member 7 (1083 aa).

The tract at residues 1–52 (MPTNFTVVPVEAHADGGGDETAERTEAPGTPEGPEPERPSPGDGNPRENSPF) is disordered. The Cytoplasmic segment spans residues 1–119 (MPTNFTVVPV…RREAKAPRMG (119 aa)). A compositionally biased stretch (basic and acidic residues) spans 12 to 26 (AHADGGGDETAERTE). The residue at position 30 (threonine 30) is a Phosphothreonine. Phosphoserine occurs at positions 50 and 62. Residues 120–142 (TFIGVYLPCLQNILGVILFLRLT) traverse the membrane as a discontinuously helical segment. 2 residues coordinate K(+): asparagine 131 and isoleucine 132. Chloride is bound at residue valine 135. The Extracellular portion of the chain corresponds to 143-149 (WIVGVAG). Residues 150-172 (VLESFLIVAMCCTCTMLTAISMS) traverse the membrane as a helical segment. The Cytoplasmic segment spans residues 173 to 196 (AIATNGVVPAGGSYYMISRSLGPE). Residues 197–225 (FGGAVGLCFYLGTTFAGAMYILGTIEIFL) form a helical membrane-spanning segment. Topologically, residues 226–249 (TYISPGAAIFQAEAAGGEAAAMLH) are extracellular. The next 2 helical transmembrane spans lie at 250–270 (NMRV…FVGV) and 272–300 (YVNK…KSAF). Over 301 to 419 (DPPDIPVCLL…PYVLTDIAAS (119 aa)) the chain is Extracellular. Intrachain disulfides connect cysteine 308/cysteine 323 and cysteine 343/cysteine 352. The N-linked (GlcNAc...) asparagine glycan is linked to asparagine 312. Asparagine 360 carries an N-linked (GlcNAc...) asparagine glycan. The helical transmembrane segment at 420 to 440 (FTLLVGIYFPSVTGIMAGSNR) threads the bilayer. Proline 429 and threonine 432 together coordinate K(+). Chloride is bound at residue proline 429. The chloride site is built by glycine 433 and isoleucine 434. Over 441-450 (SGDLKDAQKS) the chain is Cytoplasmic. Residues 451–473 (IPTGTILAIVTTSFIYLSCIVLF) traverse the membrane as a helical segment. The Extracellular segment spans residues 474 to 504 (GACIEGVVLRDKFGEALQGNLVIGMLAWPSP). The chain crosses the membrane as a helical span at residues 505 to 531 (WVIVIGSFFSTCGAGLQSLTGAPRLLQ). The Cytoplasmic segment spans residues 532 to 554 (AIARDGIVPFLQVFGHGKANGEP). 2 consecutive transmembrane segments (helical) span residues 555 to 571 (TWAL…GILI) and 574 to 598 (LDSV…ACAV). Residue tyrosine 589 coordinates chloride. The Cytoplasmic segment spans residues 599 to 612 (QTLLRTPNWRPRFK). 2 helical membrane-spanning segments follow: residues 613–632 (FYHW…LMFI) and 636–651 (YYAL…IYKY). The Cytoplasmic portion of the chain corresponds to 652-1083 (IEYRGAEKEW…GGREVITIYS (432 aa)). Residues 664–680 (GIRGLSLNAARYALLRV) form a scissor helix region. Phosphothreonine occurs at positions 973 and 980.

This sequence belongs to the SLC12A transporter family. K/Cl co-transporter subfamily. Homodimer; adopts a domain-swap conformation at the scissor helices connecting the transmembrane domain and C-terminal domain. Heterodimer with K-Cl cotransporter SLC12A5. In terms of tissue distribution, detected in muscle, brain, lung, heart and kidney.

Its subcellular location is the cell membrane. It catalyses the reaction K(+)(in) + chloride(in) = K(+)(out) + chloride(out). With respect to regulation, activated by N-ethylmaleimide (NEM). Inhibited by furosemide, DIDS and bumetanide. The inhibition is much stronger in the presence of 50 mM K(+) in the uptake medium. Inhibited by DIOA. Inhibited by WNK3. Mediates electroneutral potassium-chloride cotransport when activated by cell swelling. May mediate K(+) uptake into Deiters' cells in the cochlea and contribute to K(+) recycling in the inner ear. Important for the survival of cochlear outer and inner hair cells and the maintenance of the organ of Corti. May be required for basolateral Cl(-) extrusion in the kidney and contribute to renal acidification. The polypeptide is Solute carrier family 12 member 7 (Homo sapiens (Human)).